The primary structure comprises 409 residues: Na(+)-translocating NADH-quinone reductase subunit F (409 aa).

The chain crosses the membrane as a helical span at residues 5–25 (FIFGIIAFTALVLVLAVIILF). Positions 34 to 128 (GDITISINDD…SMDVELPEEI (95 aa)) constitute a 2Fe-2S ferredoxin-type domain. Residues C71, C77, C80, and C112 each coordinate [2Fe-2S] cluster. The FAD-binding FR-type domain maps to 131-271 (VKKWECTVIS…SGPFGEFFAK (141 aa)).

It belongs to the NqrF family. Composed of six subunits; NqrA, NqrB, NqrC, NqrD, NqrE and NqrF. The cofactor is [2Fe-2S] cluster. FAD serves as cofactor.

It is found in the cell inner membrane. It carries out the reaction a ubiquinone + n Na(+)(in) + NADH + H(+) = a ubiquinol + n Na(+)(out) + NAD(+). In terms of biological role, NQR complex catalyzes the reduction of ubiquinone-1 to ubiquinol by two successive reactions, coupled with the transport of Na(+) ions from the cytoplasm to the periplasm. The first step is catalyzed by NqrF, which accepts electrons from NADH and reduces ubiquinone-1 to ubisemiquinone by a one-electron transfer pathway. The polypeptide is Na(+)-translocating NADH-quinone reductase subunit F (Haemophilus ducreyi (strain 35000HP / ATCC 700724)).